A 131-amino-acid polypeptide reads, in one-letter code: Con-Ins Q1b (131 aa).

An N-terminal signal peptide occupies residues methionine 1–glycine 24. 4 disulfides stabilise this stretch: cysteine 29/cysteine 107, cysteine 41/cysteine 110, cysteine 53/cysteine 123, and cysteine 109/cysteine 114. Residues leucine 59–arginine 92 constitute a propeptide, c peptide. Glutamate 118 carries the post-translational modification 4-carboxyglutamate; partial. The residue at position 130 (serine 130) is a Serine amide.

The protein belongs to the insulin family. Heterodimer of A and B chains; disulfide-linked. As to expression, expressed by the venom gland.

It is found in the secreted. In terms of biological role, this venom insulin facilitates prey capture by rapidly inducing hypoglycemic shock. Intraperitoneal injection of this peptide into zebrafish lowers blood glucose with the same potency than human insulin. In vivo, when applied to water, this peptide reduces overall locomotor activity of zebrafish larvae, observed as a significant decrease in the percentage of time spent swimming and movement frequency. This chain is Con-Ins Q1b, found in Conus quercinus (Oak cone).